The sequence spans 217 residues: Adenylate kinase (217 aa).

Gly-10–Thr-15 contacts ATP. Positions Ser-30–Val-59 are NMP. AMP-binding positions include Thr-31, Arg-36, Ala-57 to Val-59, Gly-85 to Arg-88, and Gln-92. An LID region spans residues Ser-126 to Asp-163. Arg-127 is a binding site for ATP. Zn(2+) contacts are provided by Cys-130 and Cys-133. An ATP-binding site is contributed by Ile-136–Tyr-137. The Zn(2+) site is built by Cys-150 and Cys-153. Residues Arg-160 and Arg-171 each contribute to the AMP site. Arg-199 provides a ligand contact to ATP.

This sequence belongs to the adenylate kinase family. Monomer.

It is found in the cytoplasm. It carries out the reaction AMP + ATP = 2 ADP. Its pathway is purine metabolism; AMP biosynthesis via salvage pathway; AMP from ADP: step 1/1. Catalyzes the reversible transfer of the terminal phosphate group between ATP and AMP. Plays an important role in cellular energy homeostasis and in adenine nucleotide metabolism. This chain is Adenylate kinase, found in Pseudothermotoga lettingae (strain ATCC BAA-301 / DSM 14385 / NBRC 107922 / TMO) (Thermotoga lettingae).